The sequence spans 151 residues: UPF0756 membrane protein GTNG_2661 (151 aa).

4 helical membrane passes run 5–25 (VLFL…SLII), 53–73 (WGVT…EIGF), 86–106 (WIAL…VMLL), and 116–136 (LVLG…GPLI).

The protein belongs to the UPF0756 family.

The protein localises to the cell membrane. The chain is UPF0756 membrane protein GTNG_2661 from Geobacillus thermodenitrificans (strain NG80-2).